Here is a 536-residue protein sequence, read N- to C-terminus: Testis-specific protein 10-interacting protein (536 aa).

3 disordered regions span residues 1–94 (MLNT…LFSS), 185–234 (SQGL…PGQG), and 246–305 (MEEE…FKGP). Residues 48-64 (SGDSLQSQSCQQQRSYS) are compositionally biased toward low complexity. Residues 71–83 (KERKPRRRNKKGR) are compositionally biased toward basic residues. Positions 375 to 451 (QAWEQQQLKE…LQGIQHRVQA (77 aa)) form a coiled coil. Positions 491 to 536 (GNAEGIPRKHRSYRSFGVEMESSPQSPPKTEPTSSQPGRHPSPTLD) are disordered.

In Rattus norvegicus (Rat), this protein is Testis-specific protein 10-interacting protein (Tsga10ip).